The following is a 371-amino-acid chain: Flagellar P-ring protein (371 aa).

The first 25 residues, 1-25 (MTMRVCKWLLTFALLFAATLTPAHS), serve as a signal peptide directing secretion.

It belongs to the FlgI family. In terms of assembly, the basal body constitutes a major portion of the flagellar organelle and consists of four rings (L,P,S, and M) mounted on a central rod.

The protein localises to the periplasm. Its subcellular location is the bacterial flagellum basal body. Assembles around the rod to form the L-ring and probably protects the motor/basal body from shearing forces during rotation. This chain is Flagellar P-ring protein, found in Sinorhizobium fredii (strain NBRC 101917 / NGR234).